We begin with the raw amino-acid sequence, 220 residues long: uncharacterized protein (220 aa).

Residues 1–50 (MTDDVRDVNTETTDATEVAEIDSAAGEAGDSATEAFDTDSATESTAQKGQ) are disordered. Over residues 39 to 48 (DSATESTAQK) the composition is skewed to polar residues. A helical membrane pass occupies residues 65 to 85 (VPVILILLMLISGGATGWLYL).

To M.tuberculosis Rv1363c.

The protein resides in the membrane. This is an uncharacterized protein from Mycobacterium tuberculosis (strain CDC 1551 / Oshkosh).